A 99-amino-acid chain; its full sequence is Accessory protein p12I (99 aa).

Residues 3-23 (FRLLSPLSPLALTALLLFLLP) form a helical membrane-spanning segment. 2 short sequence motifs (SH3-binding) span residues 4-11 (RLLSPLSP) and 33-38 (RPPPAP). The chain crosses the membrane as a helical span at residues 48–68 (ILSGLLFLLFLPLFFSLPLLL). 2 consecutive short sequence motifs (SH3-binding) follow at residues 70–77 (PSLPITMR) and 88–93 (KAPSQP). A Glycyl lysine isopeptide (Lys-Gly) (interchain with G-Cter in ubiquitin); in isolate LAF cross-link involves residue lysine 88.

The protein belongs to the HTLV-1 accessory protein p12I family. P12I is a homodimer. Interacts with human CANX, CALR, ATP6V0C, IL2RB, IL2RG. Binds to MHC-I heavy chains HLA-A2, HLA-B7 and HLA-Cw4. Ubiquitinated; a fraction of P12I is degraded via the ubiquitin system.

It localises to the host endoplasmic reticulum membrane. The protein resides in the host Golgi apparatus. It is found in the host cis-Golgi network membrane. Its function is as follows. p12I is a modulator of T-lymphocyte proliferation and immune function and may contribute to establish a persistent infection. Binds and down-modulates cell surface expression of interleukin-2 receptors IL2RB and IL2RG. Also down-modulates cell surface MHC-I molecules by binding to free immature MHC-I heavy chains in the ER and targeting them to the proteasome for degradation. Binding to IL2RB mediates recruitment of JAK1 and JAK3. As a result of this interaction, p12I increases DNA-binding and transcriptional activity of STAT5. This Homo sapiens (Human) protein is Accessory protein p12I.